We begin with the raw amino-acid sequence, 285 residues long: Dermonecrotic toxin LlSicTox-alphaIII2 (285 aa).

Residue His-12 is part of the active site. The Mg(2+) site is built by Glu-32 and Asp-34. His-47 functions as the Nucleophile in the catalytic mechanism. A disulfide bridge connects residues Cys-51 and Cys-57. Asp-91 contacts Mg(2+).

This sequence belongs to the arthropod phospholipase D family. Class I subfamily. It depends on Mg(2+) as a cofactor. As to expression, expressed by the venom gland.

The protein localises to the secreted. The catalysed reaction is an N-(acyl)-sphingosylphosphocholine = an N-(acyl)-sphingosyl-1,3-cyclic phosphate + choline. It carries out the reaction an N-(acyl)-sphingosylphosphoethanolamine = an N-(acyl)-sphingosyl-1,3-cyclic phosphate + ethanolamine. It catalyses the reaction a 1-acyl-sn-glycero-3-phosphocholine = a 1-acyl-sn-glycero-2,3-cyclic phosphate + choline. The enzyme catalyses a 1-acyl-sn-glycero-3-phosphoethanolamine = a 1-acyl-sn-glycero-2,3-cyclic phosphate + ethanolamine. In terms of biological role, dermonecrotic toxins cleave the phosphodiester linkage between the phosphate and headgroup of certain phospholipids (sphingolipid and lysolipid substrates), forming an alcohol (often choline) and a cyclic phosphate. This toxin acts on sphingomyelin (SM) (228.2 U/mg). It may also act on ceramide phosphoethanolamine (CPE), lysophosphatidylcholine (LPC) and lysophosphatidylethanolamine (LPE), but not on lysophosphatidylserine (LPS), and lysophosphatidylglycerol (LPG). It acts by transphosphatidylation, releasing exclusively cyclic phosphate products as second products. Induces dermonecrosis, hemolysis, increased vascular permeability, edema, inflammatory response, and platelet aggregation. Is lethal to mice. In Loxosceles laeta (South American recluse spider), this protein is Dermonecrotic toxin LlSicTox-alphaIII2.